The primary structure comprises 168 residues: Phosphopantetheine adenylyltransferase (168 aa).

Serine 8 contributes to the substrate binding site. ATP is bound by residues 8-9 (SF) and histidine 16. Substrate-binding residues include lysine 40, alanine 72, and arginine 86. Residues 87–89 (GLR), glutamate 97, and 122–128 (YSFLSSS) contribute to the ATP site.

Belongs to the bacterial CoaD family. Homohexamer. Mg(2+) is required as a cofactor.

It is found in the cytoplasm. The catalysed reaction is (R)-4'-phosphopantetheine + ATP + H(+) = 3'-dephospho-CoA + diphosphate. The protein operates within cofactor biosynthesis; coenzyme A biosynthesis; CoA from (R)-pantothenate: step 4/5. Reversibly transfers an adenylyl group from ATP to 4'-phosphopantetheine, yielding dephospho-CoA (dPCoA) and pyrophosphate. This is Phosphopantetheine adenylyltransferase from Trichodesmium erythraeum (strain IMS101).